The chain runs to 374 residues: Zinc finger CCCH domain-containing protein 15 homolog (374 aa).

The segment at 1 to 20 is disordered; the sequence is MPPKQQGPSKKSEQKRKEKV. Basic and acidic residues predominate over residues 10–20; the sequence is KKSEQKRKEKV. 2 consecutive C3H1-type zinc fingers follow at residues 90–117 and 166–199; these read DPKSLLCVFFKQGLCGKGAKCKFSHDLA and VCKYFLEAVENNKYGWFWECPNGGEKCQYRHCLP.

Belongs to the ZC3H15/TMA46 family.

The protein is Zinc finger CCCH domain-containing protein 15 homolog of Caenorhabditis elegans.